Here is an 835-residue protein sequence, read N- to C-terminus: Cap-specific mRNA (nucleoside-2'-O-)-methyltransferase 1 (835 aa).

Residues 1 to 67 form a disordered region; it reads MKRRTDPECT…EGKQHSSDSF (67 aa). The Bipartite nuclear localization signal motif lies at 2–19; sequence KRRTDPECTAPIKKQKKR. Ser-28, Ser-31, Ser-53, Ser-66, and Ser-91 each carry phosphoserine. Polar residues predominate over residues 37-54; it reads SSVSHGAKASTTSLSGSD. Residues 57–67 show a composition bias toward basic and acidic residues; the sequence is TEGKQHSSDSF. The region spanning 87 to 133 is the G-patch domain; it reads YNSVSQKLMAKMGFREGEGLGKYSQGRKDIVEASSQKGRRGLGLTLR. Residue Lys-108 is modified to N6-acetyllysine. Substrate contacts are provided by residues 203–207 and Arg-218; that span reads KSVFD. The RrmJ-type SAM-dependent 2'-O-MTase domain occupies 231–450; sequence FFLNRAAMKM…ERYVVCKGLK (220 aa). Asn-234 provides a ligand contact to S-adenosyl-L-methionine. Lys-239 is an active-site residue. S-adenosyl-L-methionine is bound by residues 277 to 283 and 335 to 336; these read CAGPGGF and DI. Asp-364 is a catalytic residue. 374–376 provides a ligand contact to substrate; it reads NLQ. The Proton acceptor role is filled by Lys-404. Asn-439 is a substrate binding site. Residues 727–835 form an interaction with POLR2A region; the sequence is SSGTPKLSYT…VLSFIQMHRA (109 aa). Positions 752 to 786 constitute a WW domain; that stretch reads RTVNEPWTMGFSKSFKKKFFYNKKTKDSTFDLPAD.

As to quaternary structure, interacts with POLR2A (via C-terminus).

The protein resides in the nucleus. The catalysed reaction is a 5'-end (N(7)-methyl 5'-triphosphoguanosine)-ribonucleoside in mRNA + S-adenosyl-L-methionine = a 5'-end (N(7)-methyl 5'-triphosphoguanosine)-(2'-O-methyl-ribonucleoside) in mRNA + S-adenosyl-L-homocysteine + H(+). S-adenosyl-L-methionine-dependent methyltransferase that mediates mRNA cap1 2'-O-ribose methylation to the 5'-cap structure of mRNAs. Methylates the ribose of the first nucleotide of a m(7)GpppG-capped mRNA and small nuclear RNA (snRNA) to produce m(7)GpppRm (cap1). Displays a preference for cap0 transcripts. Cap1 modification is linked to higher levels of translation. May be involved in the interferon response pathway. In Homo sapiens (Human), this protein is Cap-specific mRNA (nucleoside-2'-O-)-methyltransferase 1 (CMTR1).